A 332-amino-acid polypeptide reads, in one-letter code: Cysteine and histidine-rich domain-containing protein 1 (332 aa).

Ala2 carries the post-translational modification N-acetylalanine. The interaction with PPP5C stretch occupies residues 2–77; sequence ALLCYNRGCG…KPPEPVKPEV (76 aa). Residues Cys5, Cys10, Cys24, His27, Cys42, and Cys43 each contribute to the Zn(2+) site. CHORD domains lie at 5–64 and 157–216; these read CYNR…KGRH and CKNG…KGKH. Thr47 is subject to Phosphothreonine. Residue Ser51 is modified to Phosphoserine. Zn(2+) contacts are provided by Cys59, His64, Cys157, Cys162, Cys176, His179, Cys194, Cys195, Cys211, and His216. Residues 65–316 form an interaction with HSP90AA1 and HSP90AB1 region; sequence NSEKPPEPVK…AEPMQWASLE (252 aa). A CS domain is found at 227–316; it reads VVPCRHDWHQ…AEPMQWASLE (90 aa).

As to quaternary structure, interacts with HSP90AA1, ROCK1 and ROCK2. Interacts with HSP90AB1 and PPP5C. As to expression, underexpressed in many breast and lung cancers.

Functionally, regulates centrosome duplication, probably by inhibiting the kinase activity of ROCK2. Proposed to act as co-chaperone for HSP90. May play a role in the regulation of NOD1 via a HSP90 chaperone complex. In vitro, has intrinsic chaperone activity. This function may be achieved by inhibiting association of ROCK2 with NPM1. Plays a role in ensuring the localization of the tyrosine kinase receptor EGFR to the plasma membrane, and thus ensures the subsequent regulation of EGFR activity and EGF-induced actin cytoskeleton remodeling. Involved in stress response. Prevents tumorigenesis. The sequence is that of Cysteine and histidine-rich domain-containing protein 1 (CHORDC1) from Homo sapiens (Human).